Reading from the N-terminus, the 264-residue chain is S-adenosylmethionine decarboxylase proenzyme (264 aa).

Serine 111 acts as the Schiff-base intermediate with substrate; via pyruvic acid in catalysis. Residue serine 111 is modified to Pyruvic acid (Ser); by autocatalysis. The Proton acceptor; for processing activity role is filled by histidine 116. Catalysis depends on cysteine 139, which acts as the Proton donor; for catalytic activity.

This sequence belongs to the prokaryotic AdoMetDC family. Type 2 subfamily. In terms of assembly, heterooctamer of four alpha and four beta chains arranged as a tetramer of alpha/beta heterodimers. Pyruvate is required as a cofactor. Post-translationally, is synthesized initially as an inactive proenzyme. Formation of the active enzyme involves a self-maturation process in which the active site pyruvoyl group is generated from an internal serine residue via an autocatalytic post-translational modification. Two non-identical subunits are generated from the proenzyme in this reaction, and the pyruvate is formed at the N-terminus of the alpha chain, which is derived from the carboxyl end of the proenzyme. The post-translation cleavage follows an unusual pathway, termed non-hydrolytic serinolysis, in which the side chain hydroxyl group of the serine supplies its oxygen atom to form the C-terminus of the beta chain, while the remainder of the serine residue undergoes an oxidative deamination to produce ammonia and the pyruvoyl group blocking the N-terminus of the alpha chain.

The enzyme catalyses S-adenosyl-L-methionine + H(+) = S-adenosyl 3-(methylsulfanyl)propylamine + CO2. It participates in amine and polyamine biosynthesis; S-adenosylmethioninamine biosynthesis; S-adenosylmethioninamine from S-adenosyl-L-methionine: step 1/1. Catalyzes the decarboxylation of S-adenosylmethionine to S-adenosylmethioninamine (dcAdoMet), the propylamine donor required for the synthesis of the polyamines spermine and spermidine from the diamine putrescine. This Geobacillus kaustophilus (strain HTA426) protein is S-adenosylmethionine decarboxylase proenzyme.